Reading from the N-terminus, the 292-residue chain is MNTSDRIKSTQIALDRDLREQALLLLKEVRAVDGVDAFSEQFVRGLAEPGLGHSHLIVTLNDKLVGLAATDEETTELAVHPAHRRQGIGKALIDAAPTSSIWAHGNTAGAQALASTLRMKKTRELLVMEISDRALDGSAAYKDPDGITHSSLANAPVEKSVAEAKWLQSNNEAFDWHPEQGGWTTHRLAQAQKADWYKDSDVLFLWDGEEIVGFHWVKQHSPELQEIYVVGLSSAYRGRGLGDPLVRLGLHHMRAHGARKVILYVEADNTPAVAAYEKLGFTVAESHVVYEK.

N-acetyltransferase domains lie at 13–168 (ALDR…KWLQ) and 159–292 (KSVA…VYEK). Residue E40 coordinates 1D-myo-inositol 2-(L-cysteinylamino)-2-deoxy-alpha-D-glucopyranoside. 77–79 (LAV) contributes to the acetyl-CoA binding site. E179, K218, and E226 together coordinate 1D-myo-inositol 2-(L-cysteinylamino)-2-deoxy-alpha-D-glucopyranoside. Residues 230-232 (VGL) and 237-243 (RGRGLGD) contribute to the acetyl-CoA site. Residue Y264 participates in 1D-myo-inositol 2-(L-cysteinylamino)-2-deoxy-alpha-D-glucopyranoside binding.

This sequence belongs to the acetyltransferase family. MshD subfamily. Monomer.

It catalyses the reaction 1D-myo-inositol 2-(L-cysteinylamino)-2-deoxy-alpha-D-glucopyranoside + acetyl-CoA = mycothiol + CoA + H(+). Functionally, catalyzes the transfer of acetyl from acetyl-CoA to desacetylmycothiol (Cys-GlcN-Ins) to form mycothiol. The protein is Mycothiol acetyltransferase of Corynebacterium glutamicum (strain R).